The chain runs to 288 residues: Elongation factor Ts (288 aa).

The tract at residues 82–85 (TDFV) is involved in Mg(2+) ion dislocation from EF-Tu.

This sequence belongs to the EF-Ts family.

Its subcellular location is the cytoplasm. Associates with the EF-Tu.GDP complex and induces the exchange of GDP to GTP. It remains bound to the aminoacyl-tRNA.EF-Tu.GTP complex up to the GTP hydrolysis stage on the ribosome. This Chlorobium luteolum (strain DSM 273 / BCRC 81028 / 2530) (Pelodictyon luteolum) protein is Elongation factor Ts.